A 53-amino-acid chain; its full sequence is HOXB-AS3 peptide (53 aa).

Residues 1–53 (MPVLPGTQRYPHQRRRFQAAGGGAESGKRGSEEAPGVAWSGSESGRDAATPAW) are disordered.

Interacts with HNRNPA1 (via the RGG-box). Interacts with IGF2BP2.

Its function is as follows. Blocks the binding of HNRNPA1 to the intronic sequences flanking exon 9 of the PKM gene by competitively binding to the HNRNPA1 RGG-box motif. This inhibits inclusion of exon 9 and promotes inclusion of exon 10, suppressing formation of the PKM M2 isoform and promoting production of the M1 isoform. Also suppresses HNRNPA1-mediated processing of microRNA 18a (miR-18a). Promotes MYC stability through interaction with IGF2BP2. The sequence is that of HOXB-AS3 peptide from Homo sapiens (Human).